Consider the following 385-residue polypeptide: MAVPPSAPVPCSPFYLRRQEPCPQCSWSMEEKAVASAGCWEPPGPPRAAVPCFSVTVEQDDILPGALRLIRELRPHWKPEQVRTKRFKDGITNKLLACYVEEDMRDCVLVRVYGERTELLVDRENEVRNFQLLRAHGCAPKLYCTFQNGLCYEYVQGVALGPEHIREPQLFRLIALEMAKIHTIHANGSLPKPTLWHKMHRYFTLVKDEISPSLSADVPKVEVLEQELAWLKEHLSQLDSPVVFCHNDLLCKNIIYDSDKGRVCFIDYEYAGYNYQAFDIGNHFNEFAGVNVVDYSRYPARETQVQWLRYYLEAQKGTAASPREVERLYAQVNKFALASHFFWALWALIQNQYSTISFDFLRYAVIRFNQYFKVKPQVSALEMPK.

It belongs to the choline/ethanolamine kinase family. As to expression, expressed in testis and liver. Low expression in ovary and kidney.

It carries out the reaction ethanolamine + ATP = phosphoethanolamine + ADP + H(+). The protein operates within phospholipid metabolism; phosphatidylethanolamine biosynthesis; phosphatidylethanolamine from ethanolamine: step 1/3. Its function is as follows. Highly specific for ethanolamine phosphorylation. Does not have choline kinase activity. This Mus musculus (Mouse) protein is Ethanolamine kinase 2 (Etnk2).